The following is a 392-amino-acid chain: MAAPLRIQSDWAQALRKDEGEAWLSCHPPGKPTLYGSLTCQGIGLDGIPEVTASEGFIVNEINKKSIHVSCPKENVSSKFLAPYTTFSRIHTKSITCLDISSGGGLGVSSSADGSMKIWQASNGELRRVLEGHVFDVNCCRFFPSGLVVLSGGMDAQLKIWSAEDASCVVTFKGHKGGILDTAIVDRGKNVVSGSRDGTARLWDCGRSACLGVIADCGSSINGVAVGAADNSINLGSPEQMPSEREVGTESKMLLLAREDKKLQCLGLQSRQPLFLFIGSDAFNCCTFLSGFLLLAGTQDGNIYQLDVRNPRTPVQVIHRSGAPVMSLLSFRDGFIASQGDGSCFIVQQDLDYVIELTGADCDPVYKVATWEKQIYTCCRDGLVRRYQLSDL.

N-acetylalanine is present on Ala-2. 5 WD repeats span residues 90–129, 132–171, 174–215, 278–316, and 360–392; these read IHTK…LRRV, GHVF…CVVT, GHKG…GVIA, IGSD…TPVQ, and ADCD…LSDL.

It belongs to the WD repeat PAAF1/RPN14 family. Interacts with PSMC1, PSMC2, PSMC3, PSMC4, PSMC5 and PSMC6. Interacts with SUPT6H.

In terms of biological role, inhibits proteasome 26S assembly and activity by impairing the association of the 19S regulatory complex with the 20S core. Protects SUPT6H from proteasomal degradation. The polypeptide is Proteasomal ATPase-associated factor 1 (PAAF1) (Bos taurus (Bovine)).